Here is a 416-residue protein sequence, read N- to C-terminus: Gamma-glutamyl phosphate reductase (416 aa).

Belongs to the gamma-glutamyl phosphate reductase family.

It is found in the cytoplasm. The enzyme catalyses L-glutamate 5-semialdehyde + phosphate + NADP(+) = L-glutamyl 5-phosphate + NADPH + H(+). The protein operates within amino-acid biosynthesis; L-proline biosynthesis; L-glutamate 5-semialdehyde from L-glutamate: step 2/2. Its function is as follows. Catalyzes the NADPH-dependent reduction of L-glutamate 5-phosphate into L-glutamate 5-semialdehyde and phosphate. The product spontaneously undergoes cyclization to form 1-pyrroline-5-carboxylate. This is Gamma-glutamyl phosphate reductase from Streptococcus equi subsp. zooepidemicus (strain MGCS10565).